Consider the following 473-residue polypeptide: Alliin lyase 2 (473 aa).

The N-terminal stretch at 1–15 (MICLVILTCIIMSNS) is a signal peptide. The propeptide occupies 16 to 25 (FVNNNNMVQA). The region spanning 38–84 (EAVANINCSEHGRAFLDGIISEGSPKCECNTCYTGPDCSEKIQGCSA) is the EGF-like; atypical domain. Asparagine 44 is a glycosylation site (N-linked (GlcNAc...) asparagine). Intrachain disulfides connect cysteine 45–cysteine 64, cysteine 66–cysteine 75, and cysteine 69–cysteine 82. 117-125 (YFFNPVSNF) is a binding site for chloride. N-linked (GlcNAc...) asparagine glycans are attached at residues asparagine 171 and asparagine 216. Lysine 276 is subject to N6-(pyridoxal phosphate)lysine. The N-linked (GlcNAc...) asparagine glycan is linked to asparagine 353. Cysteines 393 and 401 form a disulfide.

Belongs to the alliinase family. As to quaternary structure, homodimer. Pyridoxal 5'-phosphate is required as a cofactor. Post-translationally, glycosylated. In terms of tissue distribution, high expression in bulbs, lower expression in leaves, and no expression in roots.

Its subcellular location is the vacuole. The enzyme catalyses an S-alkyl-L-cysteine S-oxide = an S-alkyl sulfenate + 2-aminoprop-2-enoate. It catalyses the reaction alliin = allylsulfenate + 2-aminoprop-2-enoate. Able to cleave the C-S bond of sulfoxide derivatives of Cys to produce allicin, thus giving rise to all sulfur compounds which are responsible for most of the properties of garlic, such as the specific smell and flavor as well as the health benefits like blood lipid or blood pressure lowering. In Allium sativum (Garlic), this protein is Alliin lyase 2.